The following is a 183-amino-acid chain: Adenylate kinase (183 aa).

Residue 12 to 17 coordinates ATP; the sequence is GAGKGT. The segment at 32–61 is NMP; the sequence is STGDLLRSEVAAGSELGKEAEAVMNRGELV. AMP contacts are provided by residues Thr-33, Arg-38, 59-61, 86-89, and Gln-93; these read ELV and GFPR. Residues 127 to 133 are LID; the sequence is SRGRADD. Arg-128 serves as a coordination point for ATP. 2 residues coordinate AMP: Arg-130 and Arg-141. Gly-169 contacts ATP.

It belongs to the adenylate kinase family. In terms of assembly, monomer.

Its subcellular location is the cytoplasm. It carries out the reaction AMP + ATP = 2 ADP. Its pathway is purine metabolism; AMP biosynthesis via salvage pathway; AMP from ADP: step 1/1. In terms of biological role, catalyzes the reversible transfer of the terminal phosphate group between ATP and AMP. Plays an important role in cellular energy homeostasis and in adenine nucleotide metabolism. The protein is Adenylate kinase of Synechococcus sp. (strain CC9902).